A 494-amino-acid polypeptide reads, in one-letter code: Probable malate:quinone oxidoreductase 3 (494 aa).

Belongs to the MQO family. It depends on FAD as a cofactor.

The catalysed reaction is (S)-malate + a quinone = a quinol + oxaloacetate. Its pathway is carbohydrate metabolism; tricarboxylic acid cycle; oxaloacetate from (S)-malate (quinone route): step 1/1. This is Probable malate:quinone oxidoreductase 3 from Staphylococcus epidermidis (strain ATCC 12228 / FDA PCI 1200).